Reading from the N-terminus, the 92-residue chain is MARSVWKGPFVDGYLLKKAEKVREGGRSEVIKIWSRRSTIMPQFVGLTFGVYNGSKHIPVSVNEDMVGHKFGEFAPTRTYYGHGADKKAKRK.

It belongs to the universal ribosomal protein uS19 family.

Its function is as follows. Protein S19 forms a complex with S13 that binds strongly to the 16S ribosomal RNA. The protein is Small ribosomal subunit protein uS19 of Rhizobium rhizogenes (strain K84 / ATCC BAA-868) (Agrobacterium radiobacter).